The sequence spans 540 residues: Glucose-6-phosphate isomerase (540 aa).

Glutamate 350 acts as the Proton donor in catalysis. Active-site residues include histidine 381 and lysine 503.

Belongs to the GPI family.

It is found in the cytoplasm. It catalyses the reaction alpha-D-glucose 6-phosphate = beta-D-fructose 6-phosphate. Its pathway is carbohydrate biosynthesis; gluconeogenesis. It participates in carbohydrate degradation; glycolysis; D-glyceraldehyde 3-phosphate and glycerone phosphate from D-glucose: step 2/4. Its function is as follows. Catalyzes the reversible isomerization of glucose-6-phosphate to fructose-6-phosphate. This Burkholderia cenocepacia (strain ATCC BAA-245 / DSM 16553 / LMG 16656 / NCTC 13227 / J2315 / CF5610) (Burkholderia cepacia (strain J2315)) protein is Glucose-6-phosphate isomerase.